The sequence spans 218 residues: MFKLVQLLGDNAVRALRDIAASGTFVDGKISNPHSRVKNNLQLHDAAAYERSSKILLDAMIQNADFMEFSFPARIAPPLLTRYTPGMHYGLHPDAAYIPLPDGQLRTDVSCTIFLSDPADYDGGALHVQLGNADLRFKEAPGVAIVYPSHTLHEVEPVTRGERLVAITFIQSLIPDVQQRNLMHELNEIAALEGGKMEPANYTRLQAVQYQLLRMWRR.

In terms of domain architecture, Fe2OG dioxygenase spans 74-172 (RIAPPLLTRY…RLVAITFIQS (99 aa)). Fe cation is bound by residues H92, D94, and H153. R163 is a binding site for 2-oxoglutarate.

The cofactor is Fe(2+). L-ascorbate serves as cofactor.

The sequence is that of PKHD-type hydroxylase Sala_1910 from Sphingopyxis alaskensis (strain DSM 13593 / LMG 18877 / RB2256) (Sphingomonas alaskensis).